A 187-amino-acid chain; its full sequence is Peptidyl-tRNA hydrolase (187 aa).

Position 16 (tyrosine 16) interacts with tRNA. Residue histidine 21 is the Proton acceptor of the active site. TRNA is bound by residues tyrosine 66, asparagine 68, and asparagine 114.

Belongs to the PTH family. As to quaternary structure, monomer.

The protein localises to the cytoplasm. It carries out the reaction an N-acyl-L-alpha-aminoacyl-tRNA + H2O = an N-acyl-L-amino acid + a tRNA + H(+). In terms of biological role, hydrolyzes ribosome-free peptidyl-tRNAs (with 1 or more amino acids incorporated), which drop off the ribosome during protein synthesis, or as a result of ribosome stalling. Its function is as follows. Catalyzes the release of premature peptidyl moieties from peptidyl-tRNA molecules trapped in stalled 50S ribosomal subunits, and thus maintains levels of free tRNAs and 50S ribosomes. The protein is Peptidyl-tRNA hydrolase of Malacoplasma penetrans (strain HF-2) (Mycoplasma penetrans).